Consider the following 407-residue polypeptide: Peptidase T (407 aa).

Residue H77 participates in Zn(2+) binding. D79 is a catalytic residue. D140 contacts Zn(2+). E174 functions as the Proton acceptor in the catalytic mechanism. Zn(2+)-binding residues include E175, D197, and H379.

The protein belongs to the peptidase M20B family. It depends on Zn(2+) as a cofactor.

Its subcellular location is the cytoplasm. It carries out the reaction Release of the N-terminal residue from a tripeptide.. Functionally, cleaves the N-terminal amino acid of tripeptides. The chain is Peptidase T from Bacteroides fragilis (strain YCH46).